The following is a 434-amino-acid chain: Methylenetetrahydrofolate--tRNA-(uracil-5-)-methyltransferase TrmFO (434 aa).

FAD is bound at residue 10–15; the sequence is GAGLAG.

Belongs to the MnmG family. TrmFO subfamily. FAD serves as cofactor.

The protein localises to the cytoplasm. The catalysed reaction is uridine(54) in tRNA + (6R)-5,10-methylene-5,6,7,8-tetrahydrofolate + NADH + H(+) = 5-methyluridine(54) in tRNA + (6S)-5,6,7,8-tetrahydrofolate + NAD(+). The enzyme catalyses uridine(54) in tRNA + (6R)-5,10-methylene-5,6,7,8-tetrahydrofolate + NADPH + H(+) = 5-methyluridine(54) in tRNA + (6S)-5,6,7,8-tetrahydrofolate + NADP(+). Catalyzes the folate-dependent formation of 5-methyl-uridine at position 54 (M-5-U54) in all tRNAs. This is Methylenetetrahydrofolate--tRNA-(uracil-5-)-methyltransferase TrmFO from Bacillus cereus (strain Q1).